A 648-amino-acid polypeptide reads, in one-letter code: Zinc finger CW-type PWWP domain protein 1 (648 aa).

Disordered regions lie at residues 1–103 (MMTT…TNAE) and 137–237 (VVST…QDHS). 2 stretches are compositionally biased toward basic and acidic residues: residues 61–79 (KKKE…EQEK) and 88–97 (QAEKKEKEKS). The stretch at 74–109 (SREQEKKRKAQINKQAEKKEKEKSSLTNAEFEEIVQ) forms a coiled coil. Residues 194-208 (SKKKSNRLTLSKRKK) are compositionally biased toward basic residues. A compositionally biased stretch (basic and acidic residues) spans 209–237 (EAHEKVEKTQGGHEHRQEDRLKKTVQDHS). The segment at 250-304 (FGQCLVWVQCSFPNCGKWRRLCGNIDPSVLPDNWSCDQNTDVQYNRCDIPEETWT) adopts a CW-type zinc-finger fold. Residues cysteine 259, cysteine 264, cysteine 285, and cysteine 296 each coordinate Zn(2+). Residues 317-383 (PGSIIWAKQY…VNMLKNFQEL (67 aa)) enclose the PWWP domain. Residues 436–648 (GERKDLQLSG…EDFPVALFGK (213 aa)) form a disordered region. Over residues 453-471 (LEKKEKEEELEKEEGEKTD) the composition is skewed to basic and acidic residues. Residues 505 to 516 (TLQRKIMKRSLG) show a composition bias toward basic residues. The segment covering 585–595 (AKEEPRHREPL) has biased composition (basic and acidic residues). The span at 604–618 (LEDEASSDLDLEQLM) shows a compositional bias: acidic residues. Serine 636 carries the post-translational modification Phosphoserine.

As to expression, testis.

The protein localises to the nucleus. It localises to the chromosome. Its function is as follows. Dual histone methylation reader specific for PRDM9-catalyzed histone marks (H3K4me3 and H3K36me3). Facilitates the repair of PRDM9-induced meiotic double-strand breaks (DSBs). Essential for male fertility and spermatogenesis. Required for meiosis prophase I progression in male but not in female germ cells. The sequence is that of Zinc finger CW-type PWWP domain protein 1 (ZCWPW1) from Homo sapiens (Human).